Here is a 152-residue protein sequence, read N- to C-terminus: SsrA-binding protein (152 aa).

The protein belongs to the SmpB family.

The protein resides in the cytoplasm. Functionally, required for rescue of stalled ribosomes mediated by trans-translation. Binds to transfer-messenger RNA (tmRNA), required for stable association of tmRNA with ribosomes. tmRNA and SmpB together mimic tRNA shape, replacing the anticodon stem-loop with SmpB. tmRNA is encoded by the ssrA gene; the 2 termini fold to resemble tRNA(Ala) and it encodes a 'tag peptide', a short internal open reading frame. During trans-translation Ala-aminoacylated tmRNA acts like a tRNA, entering the A-site of stalled ribosomes, displacing the stalled mRNA. The ribosome then switches to translate the ORF on the tmRNA; the nascent peptide is terminated with the 'tag peptide' encoded by the tmRNA and targeted for degradation. The ribosome is freed to recommence translation, which seems to be the essential function of trans-translation. In Gloeobacter violaceus (strain ATCC 29082 / PCC 7421), this protein is SsrA-binding protein.